A 310-amino-acid chain; its full sequence is Methionyl-tRNA formyltransferase (310 aa).

(6S)-5,6,7,8-tetrahydrofolate is bound at residue 109-112 (SLLP).

This sequence belongs to the Fmt family.

It carries out the reaction L-methionyl-tRNA(fMet) + (6R)-10-formyltetrahydrofolate = N-formyl-L-methionyl-tRNA(fMet) + (6S)-5,6,7,8-tetrahydrofolate + H(+). Its function is as follows. Attaches a formyl group to the free amino group of methionyl-tRNA(fMet). The formyl group appears to play a dual role in the initiator identity of N-formylmethionyl-tRNA by promoting its recognition by IF2 and preventing the misappropriation of this tRNA by the elongation apparatus. This Staphylococcus epidermidis (strain ATCC 12228 / FDA PCI 1200) protein is Methionyl-tRNA formyltransferase.